The sequence spans 648 residues: 1-deoxy-D-xylulose-5-phosphate synthase (648 aa).

Thiamine diphosphate-binding positions include His-74 and 115–117; that span reads GHA. Asp-146 provides a ligand contact to Mg(2+). Residues 147–148, Asn-176, Tyr-292, and Glu-375 contribute to the thiamine diphosphate site; that span reads GA. Asn-176 contributes to the Mg(2+) binding site.

The protein belongs to the transketolase family. DXPS subfamily. In terms of assembly, homodimer. Requires Mg(2+) as cofactor. Thiamine diphosphate serves as cofactor.

The catalysed reaction is D-glyceraldehyde 3-phosphate + pyruvate + H(+) = 1-deoxy-D-xylulose 5-phosphate + CO2. Its pathway is metabolic intermediate biosynthesis; 1-deoxy-D-xylulose 5-phosphate biosynthesis; 1-deoxy-D-xylulose 5-phosphate from D-glyceraldehyde 3-phosphate and pyruvate: step 1/1. Functionally, catalyzes the acyloin condensation reaction between C atoms 2 and 3 of pyruvate and glyceraldehyde 3-phosphate to yield 1-deoxy-D-xylulose-5-phosphate (DXP). In Synechococcus sp. (strain JA-2-3B'a(2-13)) (Cyanobacteria bacterium Yellowstone B-Prime), this protein is 1-deoxy-D-xylulose-5-phosphate synthase.